The chain runs to 393 residues: NAD(P)H-quinone oxidoreductase subunit H, chloroplastic (393 aa).

This sequence belongs to the complex I 49 kDa subunit family. In terms of assembly, NDH is composed of at least 16 different subunits, 5 of which are encoded in the nucleus.

The protein resides in the plastid. It localises to the chloroplast thylakoid membrane. It carries out the reaction a plastoquinone + NADH + (n+1) H(+)(in) = a plastoquinol + NAD(+) + n H(+)(out). It catalyses the reaction a plastoquinone + NADPH + (n+1) H(+)(in) = a plastoquinol + NADP(+) + n H(+)(out). Functionally, NDH shuttles electrons from NAD(P)H:plastoquinone, via FMN and iron-sulfur (Fe-S) centers, to quinones in the photosynthetic chain and possibly in a chloroplast respiratory chain. The immediate electron acceptor for the enzyme in this species is believed to be plastoquinone. Couples the redox reaction to proton translocation, and thus conserves the redox energy in a proton gradient. The sequence is that of NAD(P)H-quinone oxidoreductase subunit H, chloroplastic from Chlorokybus atmophyticus (Soil alga).